Here is a 214-residue protein sequence, read N- to C-terminus: Transcription factor 23 (214 aa).

2 disordered regions span residues 1 to 86 (MSQR…ARER) and 174 to 214 (DSTT…LGDK). Positions 40 to 49 (TRQDPWEERS) are enriched in basic and acidic residues. Positions 76 to 128 (EASPENAARERSRVRTLRQAFLALQAALPAVPPDTKLSKLDVLVLAASYIAHL) constitute a bHLH domain. Residues 174–183 (DSTTASTPSQ) show a composition bias toward polar residues.

Forms inactive heterodimeric complexes with TCF3. In terms of tissue distribution, expressed in liver, kidney and spleen.

Its subcellular location is the nucleus. Functionally, inhibits E-box-mediated binding and transactivation of bHLH factors. Inhibitory effect is similar to that of ID proteins. Inhibits the formation of TCF3 and MYOD1 homodimers and heterodimers. Lacks DNA binding activity. Seems to play a role in the inhibition of myogenesis. The polypeptide is Transcription factor 23 (TCF23) (Homo sapiens (Human)).